We begin with the raw amino-acid sequence, 1075 residues long: DNA-directed RNA polymerase subunit beta (1075 aa).

Belongs to the RNA polymerase beta chain family. As to quaternary structure, in plastids the minimal PEP RNA polymerase catalytic core is composed of four subunits: alpha, beta, beta', and beta''. When a (nuclear-encoded) sigma factor is associated with the core the holoenzyme is formed, which can initiate transcription.

It is found in the plastid. Its subcellular location is the chloroplast. It carries out the reaction RNA(n) + a ribonucleoside 5'-triphosphate = RNA(n+1) + diphosphate. DNA-dependent RNA polymerase catalyzes the transcription of DNA into RNA using the four ribonucleoside triphosphates as substrates. The protein is DNA-directed RNA polymerase subunit beta of Oryza sativa (Rice).